The chain runs to 392 residues: Dual-specificity RNA methyltransferase RlmN (392 aa).

The active-site Proton acceptor is the Glu115. In terms of domain architecture, Radical SAM core spans 121 to 358 (EVDRGTLCIS…YKAGYASPIR (238 aa)). Cys128 and Cys369 are disulfide-bonded. Residues Cys135, Cys139, and Cys142 each coordinate [4Fe-4S] cluster. Residues 195-196 (GE), Ser227, 249-251 (SFH), and Asn326 each bind S-adenosyl-L-methionine. Residue Cys369 is the S-methylcysteine intermediate of the active site.

The protein belongs to the radical SAM superfamily. RlmN family. [4Fe-4S] cluster serves as cofactor.

It localises to the cytoplasm. It carries out the reaction adenosine(2503) in 23S rRNA + 2 reduced [2Fe-2S]-[ferredoxin] + 2 S-adenosyl-L-methionine = 2-methyladenosine(2503) in 23S rRNA + 5'-deoxyadenosine + L-methionine + 2 oxidized [2Fe-2S]-[ferredoxin] + S-adenosyl-L-homocysteine. It catalyses the reaction adenosine(37) in tRNA + 2 reduced [2Fe-2S]-[ferredoxin] + 2 S-adenosyl-L-methionine = 2-methyladenosine(37) in tRNA + 5'-deoxyadenosine + L-methionine + 2 oxidized [2Fe-2S]-[ferredoxin] + S-adenosyl-L-homocysteine. Specifically methylates position 2 of adenine 2503 in 23S rRNA and position 2 of adenine 37 in tRNAs. m2A2503 modification seems to play a crucial role in the proofreading step occurring at the peptidyl transferase center and thus would serve to optimize ribosomal fidelity. In Jannaschia sp. (strain CCS1), this protein is Dual-specificity RNA methyltransferase RlmN.